The chain runs to 740 residues: Copalyl diphosphate synthase 2 (740 aa).

Substrate is bound at residue Lys154. Mg(2+)-binding residues include Asp287 and Asp289. Residues 287–290 (DADD) carry the DXDD motif motif. Residue Lys373 coordinates substrate.

The protein belongs to the terpene synthase family. Requires Mg(2+) as cofactor.

It carries out the reaction (2E,6E,10E)-geranylgeranyl diphosphate = (+)-copalyl diphosphate. It participates in secondary metabolite biosynthesis; terpenoid biosynthesis. Functionally, monofunctional diterpene synthase converting geranylgeranyl diphosphate to copalyl diphosphate. This chain is Copalyl diphosphate synthase 2 (CPS2), found in Selaginella moellendorffii (Spikemoss).